The sequence spans 264 residues: Acyl-[acyl-carrier-protein]--UDP-N-acetylglucosamine O-acyltransferase (264 aa).

It belongs to the transferase hexapeptide repeat family. LpxA subfamily. In terms of assembly, homotrimer.

It localises to the cytoplasm. It carries out the reaction a (3R)-hydroxyacyl-[ACP] + UDP-N-acetyl-alpha-D-glucosamine = a UDP-3-O-[(3R)-3-hydroxyacyl]-N-acetyl-alpha-D-glucosamine + holo-[ACP]. The protein operates within glycolipid biosynthesis; lipid IV(A) biosynthesis; lipid IV(A) from (3R)-3-hydroxytetradecanoyl-[acyl-carrier-protein] and UDP-N-acetyl-alpha-D-glucosamine: step 1/6. In terms of biological role, involved in the biosynthesis of lipid A, a phosphorylated glycolipid that anchors the lipopolysaccharide to the outer membrane of the cell. This chain is Acyl-[acyl-carrier-protein]--UDP-N-acetylglucosamine O-acyltransferase, found in Rickettsia felis (strain ATCC VR-1525 / URRWXCal2) (Rickettsia azadi).